We begin with the raw amino-acid sequence, 172 residues long: Sec-independent protein translocase protein TatB (172 aa).

Residues 1 to 21 (MFDIGWSELLVIGVVALIAIG) form a helical membrane-spanning segment.

The protein belongs to the TatB family. In terms of assembly, the Tat system comprises two distinct complexes: a TatABC complex, containing multiple copies of TatA, TatB and TatC subunits, and a separate TatA complex, containing only TatA subunits. Substrates initially bind to the TatABC complex, which probably triggers association of the separate TatA complex to form the active translocon.

The protein localises to the cell inner membrane. Functionally, part of the twin-arginine translocation (Tat) system that transports large folded proteins containing a characteristic twin-arginine motif in their signal peptide across membranes. Together with TatC, TatB is part of a receptor directly interacting with Tat signal peptides. TatB may form an oligomeric binding site that transiently accommodates folded Tat precursor proteins before their translocation. In Rhodopseudomonas palustris (strain BisB18), this protein is Sec-independent protein translocase protein TatB.